The following is a 488-amino-acid chain: Tripartite motif-containing protein 6 (488 aa).

The segment at 15–60 adopts an RING-type zinc-finger fold; sequence CPICLELLTEPLSIDCGHSFCQVCIIGNSNNSVFGQGGRSSCPVCR. The segment at 92-133 adopts a B box-type zinc-finger fold; the sequence is LEVIFCALHGEKLQLFCKEDGKLICWLCERSQEHRGHHTFLM. Residues Cys97, His100, Cys119, and His125 each coordinate Zn(2+). Residues 132 to 223 adopt a coiled-coil conformation; sequence LMEEVAQEYQ…SIIEKAEGDL (92 aa). Residues 282 to 488 form the B30.2/SPRY domain; sequence DLRKMLKVFR…VPMTLRRPTS (207 aa).

Belongs to the TRIM/RBCC family. As to quaternary structure, homotrimer. Forms heteromultimers (via B30.2/SPRY domain) with TRIM5. Interacts with MYC. Interacts (via SPRY domain) with IKBKE. Interacts with VAMP8; this interaction contributes to the activation of the type I interferon antiviral response. Interacts with DHX16.

Its subcellular location is the cytoplasm. The enzyme catalyses S-ubiquitinyl-[E2 ubiquitin-conjugating enzyme]-L-cysteine + [acceptor protein]-L-lysine = [E2 ubiquitin-conjugating enzyme]-L-cysteine + N(6)-ubiquitinyl-[acceptor protein]-L-lysine.. It participates in protein modification; protein ubiquitination. Its function is as follows. E3 ubiquitin ligase that plays a crucial role in the activation of the IKBKE-dependent branch of the type I interferon signaling pathway. In concert with the ubiquitin-conjugating E2 enzyme UBE2K, synthesizes unanchored 'Lys-48'-linked polyubiquitin chains that promote the oligomerization and autophosphorylation of IKBKE leading to stimulation of an antiviral response. Also ubiquitinates MYC and inhibits its transcription activation activity, maintaining the pluripotency of embryonic stem cells. Promotes the association of unanchored 'Lys-48'-polyubiquitin chains with DHX16 leading to enhancement of RIGI-mediated innate antiviral immune response. This Mus musculus (Mouse) protein is Tripartite motif-containing protein 6 (Trim6).